Reading from the N-terminus, the 498-residue chain is Cytochrome P450 monooxygenase idtP (498 aa).

The N-terminal stretch at 1–20 (MFLLHILAIGACLLWYFVRS) is a signal peptide. Residue Cys439 participates in heme binding.

Belongs to the cytochrome P450 family. Heme is required as a cofactor.

The protein operates within secondary metabolite biosynthesis. Cytochrome P450 monooxygenase; part of the gene cluster that mediates the biosynthesis of paspalitrems, indole-diterpene (IDT) mycotoxins that are potent tremorgens in mammals. The geranylgeranyl diphosphate (GGPP) synthase idtG is proposed to catalyze the first step in IDT biosynthesis via catalysis of a series of iterative condensations of isopentenyl diphosphate (IPP) with dimethylallyl diphosphate (DMAPP), geranyl diphosphate (GPP), and farnesyl diphosphate (FPP), to form GGPP. Condensation of indole-3-glycerol phosphate with GGPP by the prenyltransferase idtC then forms 3-geranylgeranylindole (3-GGI). Epoxidation of the two terminal alkenes of the geranylgeranyl moiety by the FAD-dependent monooxygenase idtM, and cyclization by the terpene cyclase idtB then leads to the production of paspaline. The cytochrome P450 monooxygenase idtP then catalyzes oxidative elimination of the pendant methyl group at C-12 of paspaline and generates the C-10 ketone to yield 13-desoxypaxilline. The cytochrome P450 monooxygenase idtQ may catalyze the C-13 oxidation of 13-desoxypaxilline to afford paxilline. Considering that both paspalicine and paxilline were detected in C.paspali, idtQ also catalyzes the formation of paspalinine from 13-desoxypaxilline via paspalicine as an intermediate. Finally, the alpha-prenyltransferase idtF prenylates paspalinine at the C-20 or the C-21 positions to yield paspalitrems A and C, respectively. The hydroxylation of paspalitrem A at C-32 by a still unknown oxidase affords paspalitrem B. The chain is Cytochrome P450 monooxygenase idtP from Claviceps paspali (Rye ergot fungus).